The sequence spans 126 residues: MSNVPADLKYTDEHEWIRTEADGTLTVGITDHAQSTLGDIVFLELPAVGKSVSAGDAVGVVESVKAASDIYSPVSGEIIAINEEAADSPEEVNSDAYGVWLFKIKLADGASTDKLIDADAYGKLID.

The Lipoyl-binding domain maps to 24 to 105 (TLTVGITDHA…AYGVWLFKIK (82 aa)). K65 bears the N6-lipoyllysine mark.

The protein belongs to the GcvH family. The glycine cleavage system is composed of four proteins: P, T, L and H. The cofactor is (R)-lipoate.

The glycine cleavage system catalyzes the degradation of glycine. The H protein shuttles the methylamine group of glycine from the P protein to the T protein. In Burkholderia ambifaria (strain MC40-6), this protein is Glycine cleavage system H protein.